The following is an 847-amino-acid chain: Alpha-glucuronidase A (847 aa).

The N-terminal stretch at 1-22 (MRSFLLLTALLGVAAVAEDGLA) is a signal peptide. Residues N48, N78, N227, N315, N349, N457, N472, N534, N583, N689, N738, N739, and N769 are each glycosylated (N-linked (GlcNAc...) asparagine).

The protein belongs to the glycosyl hydrolase 67 family.

It localises to the secreted. It carries out the reaction an alpha-D-glucuronoside + H2O = D-glucuronate + an alcohol. Functionally, alpha-glucuronidase involved in the hydrolysis of xylan, a major structural heterogeneous polysaccharide found in plant biomass representing the second most abundant polysaccharide in the biosphere, after cellulose. Releases 4-O-methylglucuronic acid from xylan. In Emericella nidulans (strain FGSC A4 / ATCC 38163 / CBS 112.46 / NRRL 194 / M139) (Aspergillus nidulans), this protein is Alpha-glucuronidase A (aguA).